Consider the following 338-residue polypeptide: UDP-glucose 4-epimerase (338 aa).

NAD(+) contacts are provided by residues 11–12 (YI), 31–36 (DNLCNS), 58–59 (DI), 80–84 (FAGLK), N99, S124, Y149, K153, and F178. The substrate site is built by S124 and Y149. Residue Y149 is the Proton acceptor of the active site. Substrate contacts are provided by residues N179, 199–200 (NL), 216–218 (SVF), R231, and 292–295 (RSGD).

This sequence belongs to the NAD(P)-dependent epimerase/dehydratase family. In terms of assembly, homodimer. NAD(+) serves as cofactor.

It catalyses the reaction UDP-alpha-D-glucose = UDP-alpha-D-galactose. It participates in carbohydrate metabolism; galactose metabolism. Functionally, involved in the metabolism of galactose. Catalyzes the conversion of UDP-galactose (UDP-Gal) to UDP-glucose (UDP-Glc) through a mechanism involving the transient reduction of NAD. By controlling the internal galactose concentration, it may be linked to the biosynthesis of lipopolysaccharide surface molecules, which are important for the pathogenesis of H.influenzae. The polypeptide is UDP-glucose 4-epimerase (galE) (Haemophilus influenzae (strain ATCC 51907 / DSM 11121 / KW20 / Rd)).